A 322-amino-acid chain; its full sequence is Heat-inducible transcription repressor HrcA (322 aa).

Belongs to the HrcA family.

Functionally, negative regulator of class I heat shock genes (grpE-dnaK-dnaJ and groELS operons). Prevents heat-shock induction of these operons. This Staphylococcus carnosus (strain TM300) protein is Heat-inducible transcription repressor HrcA.